Here is a 225-residue protein sequence, read N- to C-terminus: UPF0758 protein AZOSEA04420 (225 aa).

An MPN domain is found at 102–225 (VFESPLAVRN…PLSFAERGLL (124 aa)). Residues His-173, His-175, and Asp-186 each coordinate Zn(2+). The short motif at 173-186 (HNHPSGAAEPSPAD) is the JAMM motif element.

This sequence belongs to the UPF0758 family.

In Aromatoleum aromaticum (strain DSM 19018 / LMG 30748 / EbN1) (Azoarcus sp. (strain EbN1)), this protein is UPF0758 protein AZOSEA04420.